A 129-amino-acid chain; its full sequence is Glycine cleavage system H protein (129 aa).

Residues Thr-24–Lys-106 form the Lipoyl-binding domain. Lys-65 carries the post-translational modification N6-lipoyllysine.

This sequence belongs to the GcvH family. As to quaternary structure, the glycine cleavage system is composed of four proteins: P, T, L and H. The cofactor is (R)-lipoate.

The glycine cleavage system catalyzes the degradation of glycine. The H protein shuttles the methylamine group of glycine from the P protein to the T protein. This Salmonella arizonae (strain ATCC BAA-731 / CDC346-86 / RSK2980) protein is Glycine cleavage system H protein.